The following is a 358-amino-acid chain: Peptide chain release factor 1 (358 aa).

Q236 bears the N5-methylglutamine mark.

The protein belongs to the prokaryotic/mitochondrial release factor family. Post-translationally, methylated by PrmC. Methylation increases the termination efficiency of RF1.

It is found in the cytoplasm. In terms of biological role, peptide chain release factor 1 directs the termination of translation in response to the peptide chain termination codons UAG and UAA. The polypeptide is Peptide chain release factor 1 (Corynebacterium glutamicum (strain ATCC 13032 / DSM 20300 / JCM 1318 / BCRC 11384 / CCUG 27702 / LMG 3730 / NBRC 12168 / NCIMB 10025 / NRRL B-2784 / 534)).